We begin with the raw amino-acid sequence, 198 residues long: Phosphoheptose isomerase (198 aa).

The 159-residue stretch at 40 to 198 (IVTALRSGRK…IEAALMQDLS (159 aa)) folds into the SIS domain. 55–57 (NGG) lines the substrate pocket. Zn(2+) is bound by residues His64 and Glu68. Substrate is bound by residues Glu68, 97 to 98 (ND), 123 to 125 (STS), Ser128, and Gln175. Residues Gln175 and His183 each contribute to the Zn(2+) site.

This sequence belongs to the SIS family. GmhA subfamily. As to quaternary structure, homotetramer. It depends on Zn(2+) as a cofactor.

The protein resides in the cytoplasm. The catalysed reaction is 2 D-sedoheptulose 7-phosphate = D-glycero-alpha-D-manno-heptose 7-phosphate + D-glycero-beta-D-manno-heptose 7-phosphate. It participates in carbohydrate biosynthesis; D-glycero-D-manno-heptose 7-phosphate biosynthesis; D-glycero-alpha-D-manno-heptose 7-phosphate and D-glycero-beta-D-manno-heptose 7-phosphate from sedoheptulose 7-phosphate: step 1/1. Functionally, catalyzes the isomerization of sedoheptulose 7-phosphate in D-glycero-D-manno-heptose 7-phosphate. The chain is Phosphoheptose isomerase from Bradyrhizobium sp. (strain BTAi1 / ATCC BAA-1182).